The following is a 332-amino-acid chain: Methionyl-tRNA formyltransferase (332 aa).

114 to 117 (SLLP) serves as a coordination point for (6S)-5,6,7,8-tetrahydrofolate.

Belongs to the Fmt family.

It catalyses the reaction L-methionyl-tRNA(fMet) + (6R)-10-formyltetrahydrofolate = N-formyl-L-methionyl-tRNA(fMet) + (6S)-5,6,7,8-tetrahydrofolate + H(+). Functionally, attaches a formyl group to the free amino group of methionyl-tRNA(fMet). The formyl group appears to play a dual role in the initiator identity of N-formylmethionyl-tRNA by promoting its recognition by IF2 and preventing the misappropriation of this tRNA by the elongation apparatus. The chain is Methionyl-tRNA formyltransferase from Corynebacterium aurimucosum (strain ATCC 700975 / DSM 44827 / CIP 107346 / CN-1) (Corynebacterium nigricans).